We begin with the raw amino-acid sequence, 508 residues long: Photosystem II CP47 reaction center protein (508 aa).

Helical transmembrane passes span 21–36 (SVHIMHTALVSGWAGS), 101–115 (IVFSGLCFLAAIWHW), 140–156 (GIHLFLSGVACFGFGAF), 203–218 (IAAGTLGILAGLFHLS), 237–252 (VLSSSIAAVFFAAFVV), and 457–472 (SFALLFFFGHIWHGSR).

Belongs to the PsbB/PsbC family. PsbB subfamily. In terms of assembly, PSII is composed of 1 copy each of membrane proteins PsbA, PsbB, PsbC, PsbD, PsbE, PsbF, PsbH, PsbI, PsbJ, PsbK, PsbL, PsbM, PsbT, PsbX, PsbY, PsbZ, Psb30/Ycf12, at least 3 peripheral proteins of the oxygen-evolving complex and a large number of cofactors. It forms dimeric complexes. Requires Binds multiple chlorophylls. PSII binds additional chlorophylls, carotenoids and specific lipids. as cofactor.

Its subcellular location is the plastid. The protein localises to the chloroplast thylakoid membrane. Its function is as follows. One of the components of the core complex of photosystem II (PSII). It binds chlorophyll and helps catalyze the primary light-induced photochemical processes of PSII. PSII is a light-driven water:plastoquinone oxidoreductase, using light energy to abstract electrons from H(2)O, generating O(2) and a proton gradient subsequently used for ATP formation. This chain is Photosystem II CP47 reaction center protein, found in Lobularia maritima (Sweet alyssum).